Reading from the N-terminus, the 363-residue chain is Probable aminomethyltransferase (363 aa).

It belongs to the GcvT family. As to quaternary structure, the glycine cleavage system is composed of four proteins: P, T, L and H.

The enzyme catalyses N(6)-[(R)-S(8)-aminomethyldihydrolipoyl]-L-lysyl-[protein] + (6S)-5,6,7,8-tetrahydrofolate = N(6)-[(R)-dihydrolipoyl]-L-lysyl-[protein] + (6R)-5,10-methylene-5,6,7,8-tetrahydrofolate + NH4(+). The glycine cleavage system catalyzes the degradation of glycine. This Halobacterium salinarum (strain ATCC 29341 / DSM 671 / R1) protein is Probable aminomethyltransferase.